The sequence spans 139 residues: GPI-anchored protein 53 (139 aa).

An N-terminal signal peptide occupies residues 1–17; it reads MKFQLLTLVSIATTTLA. Low complexity-rich tracts occupy residues 57-69 and 77-101; these read TITS…TTTT and TSTT…SSSS. The segment at 57–115 is disordered; the sequence is TITSSSSTTTTTTAKKDKKTTSTTSASSTTTTSTKSNSTSPSSSSSKKHKSETASITKT. N-linked (GlcNAc...) asparagine glycosylation occurs at asparagine 93. Glycine 116 is lipidated: GPI-anchor amidated glycine. A propeptide spans 117-139 (removed in mature form); that stretch reads GADSVAAAAAVGGPILAALALLL.

It localises to the cell membrane. The sequence is that of GPI-anchored protein 53 (PGA53) from Candida albicans (strain SC5314 / ATCC MYA-2876) (Yeast).